We begin with the raw amino-acid sequence, 96 residues long: Beta-defensin 20 (96 aa).

The signal sequence occupies residues 1–21 (MKLLQVLLVLLFVALADGAQP). Cystine bridges form between C24–C52, C32–C46, and C36–C53.

Belongs to the beta-defensin family.

The protein resides in the secreted. Its function is as follows. Has antibacterial activity. In Mus musculus (Mouse), this protein is Beta-defensin 20 (Defb20).